The following is an 811-amino-acid chain: Protein kinase C-binding protein NELL2a (811 aa).

Positions 1 to 18 (MAFLQLFVGLLCGAAVSA) are cleaved as a signal peptide. In terms of domain architecture, Laminin G-like spans 54 to 225 (AFMFQGSSRS…TQCPDLNRTC (172 aa)). 3 N-linked (GlcNAc...) asparagine glycosylation sites follow: asparagine 222, asparagine 290, and asparagine 295. The VWFC 1 domain maps to 269-328 (RTCRVKDQIYREEQSWTDGCKNCTCSNGTVRCEKILCPPLDCPDGTTPAYVTGTCCKECQ). Residues 395 to 437 (GHDFCAEENICSENSDCVNLDAGASCGCKNGFRPLRLDSAYCE) enclose the EGF-like 1 domain. Cystine bridges form between cysteine 399-cysteine 411, cysteine 405-cysteine 420, and cysteine 422-cysteine 436. Residues aspartate 438, isoleucine 439, and glutamate 441 each coordinate Ca(2+). The EGF-like 2; calcium-binding domain maps to 438–479 (DIDECAEGRHYCRENTECVNTAGSFMCVCHTGFIRIDDYSCT). 9 disulfides stabilise this stretch: cysteine 442-cysteine 455, cysteine 449-cysteine 464, cysteine 466-cysteine 478, cysteine 484-cysteine 497, cysteine 491-cysteine 506, cysteine 508-cysteine 519, cysteine 523-cysteine 533, cysteine 527-cysteine 539, and cysteine 541-cysteine 550. Ca(2+)-binding residues include asparagine 457, threonine 458, and serine 461. Positions 480-520 (EHDECASGQHDCDENALCFNTVGGHSCSCKPGYSGNGTVCR) constitute an EGF-like 3; calcium-binding domain. Asparagine 515 is a glycosylation site (N-linked (GlcNAc...) asparagine). The 31-residue stretch at 521–551 (ALCDGRCLNGGSCASPNVCVCVQGFSGQNCE) folds into the EGF-like 4 domain. Ca(2+) contacts are provided by aspartate 553, isoleucine 554, and glutamate 556. In terms of domain architecture, EGF-like 5; calcium-binding spans 553–592 (DIDECSEGLVQCAAHATCVNLPGWYHCECRDGYHDNEVFS). 3 cysteine pairs are disulfide-bonded: cysteine 557–cysteine 570, cysteine 564–cysteine 579, and cysteine 581–cysteine 598. Ca(2+)-binding residues include asparagine 572, leucine 573, and tryptophan 576. Positions 600, 601, and 603 each coordinate Ca(2+). In terms of domain architecture, EGF-like 6; calcium-binding spans 600 to 635 (DIDECRTGRSTCANDTVCFNLDGGFDCRCPHGHNCS). 3 disulfides stabilise this stretch: cysteine 604/cysteine 617, cysteine 611/cysteine 626, and cysteine 628/cysteine 634. An N-linked (GlcNAc...) asparagine glycan is attached at asparagine 613. Ca(2+) contacts are provided by asparagine 619, leucine 620, and glycine 623. Residue asparagine 633 is glycosylated (N-linked (GlcNAc...) asparagine). 2 consecutive VWFC domains span residues 636 to 691 (GDCI…PECD) and 696 to 754 (SQCL…PRCV).

Homotrimer.

It is found in the secreted. Functionally, may regulate neuronal differentiation, polarization and axon guidance. The protein is Protein kinase C-binding protein NELL2a (nell2a) of Danio rerio (Zebrafish).